The chain runs to 296 residues: 4-diphosphocytidyl-2-C-methyl-D-erythritol kinase (296 aa).

Residue Lys-18 is part of the active site. 103 to 113 (PHGAGLGGGSS) contacts ATP. Residue Asp-146 is part of the active site.

It belongs to the GHMP kinase family. IspE subfamily.

It catalyses the reaction 4-CDP-2-C-methyl-D-erythritol + ATP = 4-CDP-2-C-methyl-D-erythritol 2-phosphate + ADP + H(+). It participates in isoprenoid biosynthesis; isopentenyl diphosphate biosynthesis via DXP pathway; isopentenyl diphosphate from 1-deoxy-D-xylulose 5-phosphate: step 3/6. Catalyzes the phosphorylation of the position 2 hydroxy group of 4-diphosphocytidyl-2C-methyl-D-erythritol. This is 4-diphosphocytidyl-2-C-methyl-D-erythritol kinase from Solidesulfovibrio magneticus (strain ATCC 700980 / DSM 13731 / RS-1) (Desulfovibrio magneticus).